Reading from the N-terminus, the 370-residue chain is Protein-glutamate methylesterase/protein-glutamine glutaminase 3 (370 aa).

One can recognise a Response regulatory domain in the interval 3 to 119 (KVLIVDDSAL…SLNVSRIERE (117 aa)). At D53 the chain carries 4-aspartylphosphate. A CheB-type methylesterase domain is found at 166 to 360 (SLTEIGVVLI…GQLNAWMSRT (195 aa)). Active-site residues include S178, H205, and D302.

The protein belongs to the CheB family. In terms of processing, phosphorylated by CheA. Phosphorylation of the N-terminal regulatory domain activates the methylesterase activity.

The protein localises to the cytoplasm. It carries out the reaction [protein]-L-glutamate 5-O-methyl ester + H2O = L-glutamyl-[protein] + methanol + H(+). The enzyme catalyses L-glutaminyl-[protein] + H2O = L-glutamyl-[protein] + NH4(+). Functionally, involved in chemotaxis. Part of a chemotaxis signal transduction system that modulates chemotaxis in response to various stimuli. Catalyzes the demethylation of specific methylglutamate residues introduced into the chemoreceptors (methyl-accepting chemotaxis proteins or MCP) by CheR. Also mediates the irreversible deamidation of specific glutamine residues to glutamic acid. The protein is Protein-glutamate methylesterase/protein-glutamine glutaminase 3 of Rhodospirillum rubrum (strain ATCC 11170 / ATH 1.1.1 / DSM 467 / LMG 4362 / NCIMB 8255 / S1).